Here is a 311-residue protein sequence, read N- to C-terminus: Acetyl-coenzyme A carboxylase carboxyl transferase subunit beta (311 aa).

One can recognise a CoA carboxyltransferase N-terminal domain in the interval 32-299; it reads LWVKCPVSEE…TSMPAALTPP (268 aa). A disordered region spans residues 291–311; sequence SMPAALTPPAPDHVVADGGSH.

Belongs to the AccD/PCCB family. In terms of assembly, acetyl-CoA carboxylase is a heterohexamer composed of biotin carboxyl carrier protein (AccB), biotin carboxylase (AccC) and two subunits each of ACCase subunit alpha (AccA) and ACCase subunit beta (AccD).

It is found in the cytoplasm. The enzyme catalyses N(6)-carboxybiotinyl-L-lysyl-[protein] + acetyl-CoA = N(6)-biotinyl-L-lysyl-[protein] + malonyl-CoA. The protein operates within lipid metabolism; malonyl-CoA biosynthesis; malonyl-CoA from acetyl-CoA: step 1/1. Functionally, component of the acetyl coenzyme A carboxylase (ACC) complex. Biotin carboxylase (BC) catalyzes the carboxylation of biotin on its carrier protein (BCCP) and then the CO(2) group is transferred by the transcarboxylase to acetyl-CoA to form malonyl-CoA. In Maricaulis maris (strain MCS10) (Caulobacter maris), this protein is Acetyl-coenzyme A carboxylase carboxyl transferase subunit beta.